The following is a 225-amino-acid chain: Cytochrome b6-f complex iron-sulfur subunit, chloroplastic (225 aa).

Residues 1–46 (MASTALSTASNPTQLCRSRASLGKPVKGLGFGRERVPRTATTITCQ) constitute a chloroplast transit peptide. A helical transmembrane segment spans residues 69–89 (LLGAISLPTVGMLVPYGAFFI). The Rieske domain maps to 112-208 (AEEWLKTHGP…ADVDDGKVLF (97 aa)). Cysteine 154, histidine 156, cysteine 172, and histidine 175 together coordinate [2Fe-2S] cluster. An intrachain disulfide couples cysteine 159 to cysteine 174.

The protein belongs to the Rieske iron-sulfur protein family. The 4 large subunits of the cytochrome b6-f complex are cytochrome b6, subunit IV (17 kDa polypeptide, petD), cytochrome f and the Rieske protein, while the 4 small subunits are petG, petL, petM and petN. The complex functions as a dimer. It depends on [2Fe-2S] cluster as a cofactor.

The protein resides in the plastid. Its subcellular location is the chloroplast thylakoid membrane. It catalyses the reaction 2 oxidized [plastocyanin] + a plastoquinol + 2 H(+)(in) = 2 reduced [plastocyanin] + a plastoquinone + 4 H(+)(out). Functionally, component of the cytochrome b6-f complex, which mediates electron transfer between photosystem II (PSII) and photosystem I (PSI), cyclic electron flow around PSI, and state transitions. In Oryza sativa subsp. japonica (Rice), this protein is Cytochrome b6-f complex iron-sulfur subunit, chloroplastic (petC).